The sequence spans 118 residues: Light-harvesting protein B-800/850 gamma chain (118 aa).

Functionally, seems to be required for the LH-II stabilization. This chain is Light-harvesting protein B-800/850 gamma chain (pucE), found in Rhodobacter capsulatus (Rhodopseudomonas capsulata).